The chain runs to 352 residues: Phosphoribosylformylglycinamidine cyclo-ligase (352 aa).

This sequence belongs to the AIR synthase family.

Its subcellular location is the cytoplasm. The enzyme catalyses 2-formamido-N(1)-(5-O-phospho-beta-D-ribosyl)acetamidine + ATP = 5-amino-1-(5-phospho-beta-D-ribosyl)imidazole + ADP + phosphate + H(+). It functions in the pathway purine metabolism; IMP biosynthesis via de novo pathway; 5-amino-1-(5-phospho-D-ribosyl)imidazole from N(2)-formyl-N(1)-(5-phospho-D-ribosyl)glycinamide: step 2/2. In Hahella chejuensis (strain KCTC 2396), this protein is Phosphoribosylformylglycinamidine cyclo-ligase.